Reading from the N-terminus, the 422-residue chain is MIDNIIDYLYERGSIAQITDRKKLNAVLNSQPITLYCGFDPTADSLHIGHLAPLLCLKRFQKAGHRPLILLGGATGLIGDPSFKDSERKLQSFNTTQKWIKKIKLQIALFIDCNSNNASQAHIIDNYSWFSSMNILTFLRDIGKFFSINKMINKDIIKKRLKNDNYGISYTEFSYNLMQSYDFAHIYKHYDAILQIGGSDQWGNIISGIDLIKRMYKKNAYGLTVPLLTNFNNIKFGKTEKNTIWLDPEKTSPYQFYQYWINIDDKSAYHFLKIFTDISVQDINSFKNRDHSYSQAQYILAENMTQLVHGKRGLNIAQRISQNLFSYNILKLTLNDFHQLIQDGIPNIILETNTSLQEALTKSKLATSRSQARYFIKSNAITINAHKQSKIEYIFQDSDRIYNLYTLLKRGKKNYCLIQWNI.

An L-tyrosine-binding site is contributed by tyrosine 36. Positions 41–50 (PTADSLHIGH) match the 'HIGH' region motif. Positions 175 and 179 each coordinate L-tyrosine. Residues 235-239 (KFGKT) carry the 'KMSKS' region motif. Lysine 238 is a binding site for ATP. Positions 354–411 (TSLQEALTKSKLATSRSQARYFIKSNAITINAHKQSKIEYIFQDSDRIYNLYTLLKRG) constitute an S4 RNA-binding domain.

The protein belongs to the class-I aminoacyl-tRNA synthetase family. TyrS type 1 subfamily. As to quaternary structure, homodimer.

It is found in the cytoplasm. It catalyses the reaction tRNA(Tyr) + L-tyrosine + ATP = L-tyrosyl-tRNA(Tyr) + AMP + diphosphate + H(+). Functionally, catalyzes the attachment of tyrosine to tRNA(Tyr) in a two-step reaction: tyrosine is first activated by ATP to form Tyr-AMP and then transferred to the acceptor end of tRNA(Tyr). The polypeptide is Tyrosine--tRNA ligase (Blochmanniella floridana).